The sequence spans 150 residues: Macrodomain Ter protein (150 aa).

It belongs to the MatP family. Homodimer.

It is found in the cytoplasm. Its function is as follows. Required for spatial organization of the terminus region of the chromosome (Ter macrodomain) during the cell cycle. Prevents early segregation of duplicated Ter macrodomains during cell division. Binds specifically to matS, which is a 13 bp signature motif repeated within the Ter macrodomain. The chain is Macrodomain Ter protein from Klebsiella pneumoniae (strain 342).